Consider the following 229-residue polypeptide: Uracil-DNA glycosylase (229 aa).

Aspartate 64 (proton acceptor) is an active-site residue.

It belongs to the uracil-DNA glycosylase (UDG) superfamily. UNG family.

The protein resides in the cytoplasm. The enzyme catalyses Hydrolyzes single-stranded DNA or mismatched double-stranded DNA and polynucleotides, releasing free uracil.. Its function is as follows. Excises uracil residues from the DNA which can arise as a result of misincorporation of dUMP residues by DNA polymerase or due to deamination of cytosine. This is Uracil-DNA glycosylase from Escherichia fergusonii (strain ATCC 35469 / DSM 13698 / CCUG 18766 / IAM 14443 / JCM 21226 / LMG 7866 / NBRC 102419 / NCTC 12128 / CDC 0568-73).